The primary structure comprises 67 residues: Large ribosomal subunit protein bL35 (67 aa).

The protein belongs to the bacterial ribosomal protein bL35 family.

The polypeptide is Large ribosomal subunit protein bL35 (Synechocystis sp. (strain ATCC 27184 / PCC 6803 / Kazusa)).